Reading from the N-terminus, the 377-residue chain is D-alanine--D-alanine ligase (377 aa).

One can recognise an ATP-grasp domain in the interval lysine 140 to aspartate 349. Valine 170–leucine 225 provides a ligand contact to ATP. Mg(2+)-binding residues include aspartate 303, glutamate 316, and asparagine 318.

It belongs to the D-alanine--D-alanine ligase family. It depends on Mg(2+) as a cofactor. The cofactor is Mn(2+).

It is found in the cytoplasm. The enzyme catalyses 2 D-alanine + ATP = D-alanyl-D-alanine + ADP + phosphate + H(+). Its pathway is cell wall biogenesis; peptidoglycan biosynthesis. Its function is as follows. Cell wall formation. This Leuconostoc mesenteroides subsp. mesenteroides (strain ATCC 8293 / DSM 20343 / BCRC 11652 / CCM 1803 / JCM 6124 / NCDO 523 / NBRC 100496 / NCIMB 8023 / NCTC 12954 / NRRL B-1118 / 37Y) protein is D-alanine--D-alanine ligase.